The sequence spans 440 residues: Ribosomal protein uS12 methylthiotransferase RimO (440 aa).

The MTTase N-terminal domain occupies 6-116; it reads PKVGFVSLGC…VVTAVHEVVP (111 aa). Residues Cys-15, Cys-51, Cys-80, Cys-149, Cys-153, and Cys-156 each contribute to the [4Fe-4S] cluster site. The 239-residue stretch at 135–373 folds into the Radical SAM core domain; the sequence is LTPRHYAYLK…MAHQQAISAA (239 aa). The 65-residue stretch at 376–440 folds into the TRAM domain; sequence QLKVGKEIEV…DEYDLWAELV (65 aa).

Belongs to the methylthiotransferase family. RimO subfamily. The cofactor is [4Fe-4S] cluster.

The protein resides in the cytoplasm. It catalyses the reaction L-aspartate(89)-[ribosomal protein uS12]-hydrogen + (sulfur carrier)-SH + AH2 + 2 S-adenosyl-L-methionine = 3-methylsulfanyl-L-aspartate(89)-[ribosomal protein uS12]-hydrogen + (sulfur carrier)-H + 5'-deoxyadenosine + L-methionine + A + S-adenosyl-L-homocysteine + 2 H(+). Its function is as follows. Catalyzes the methylthiolation of an aspartic acid residue of ribosomal protein uS12. This chain is Ribosomal protein uS12 methylthiotransferase RimO, found in Pseudomonas aeruginosa (strain ATCC 15692 / DSM 22644 / CIP 104116 / JCM 14847 / LMG 12228 / 1C / PRS 101 / PAO1).